Reading from the N-terminus, the 174-residue chain is Repair DNA polymerase X (174 aa).

The segment at 42–51 (REEKMLNDVD) is involved in ssDNA binding. Positions 49 and 51 each coordinate Mg(2+). Cys81 and Cys86 form a disulfide bridge. Asp100 provides a ligand contact to Mg(2+).

This sequence belongs to the DNA polymerase type-X family. The cofactor is Mg(2+).

The protein resides in the virion. It carries out the reaction DNA(n) + a 2'-deoxyribonucleoside 5'-triphosphate = DNA(n+1) + diphosphate. Error-prone polymerase lacking a proofreading 3'-5' exonuclease which catalyzes the gap-filling reaction during the DNA repair process. Specifically binds intermediates in the single-nucleotide base-excision repair process. Also catalyzes DNA polymerization with low nucleotide-insertion fidelity. Probably acts as a strategic DNA mutase, which gives rise to a rapid emergence of variants. Generates mismatched G-G pairs, in that case, the polymerase first binds the deoxynucleotide followed by mismatch formation. Together with the viral DNA ligase, fills the single nucleotide gaps generated by the AP endonuclease. Binds DNA with high affinity via the helix alphaE. The sequence is that of Repair DNA polymerase X from Ornithodoros (relapsing fever ticks).